Consider the following 92-residue polypeptide: Auxin-responsive protein SAUR28 (92 aa).

This sequence belongs to the ARG7 family. As to expression, higher expression in thermo-responsive cultivars (e.g. cv. Alst-1, cv. Ang-0 and cv. Com-0) than in low thermo-responsive cultivars (e.g. cv. Dja-1, cv. El-0 and cv. Kon).

The protein localises to the cell membrane. Functions as a positive effector of cell expansion through modulation of auxin transport. Involved in thermo-responsiveness of plant architecture. Enhances plasma membrane H(+)-ATPase. In Arabidopsis thaliana (Mouse-ear cress), this protein is Auxin-responsive protein SAUR28.